We begin with the raw amino-acid sequence, 140 residues long: Nucleoside diphosphate kinase (140 aa).

ATP is bound by residues Lys-11, Phe-59, Arg-87, Thr-93, Arg-104, and Asn-114. Residue His-117 is the Pros-phosphohistidine intermediate of the active site.

The protein belongs to the NDK family. Homotetramer. Requires Mg(2+) as cofactor.

The protein localises to the cytoplasm. The catalysed reaction is a 2'-deoxyribonucleoside 5'-diphosphate + ATP = a 2'-deoxyribonucleoside 5'-triphosphate + ADP. The enzyme catalyses a ribonucleoside 5'-diphosphate + ATP = a ribonucleoside 5'-triphosphate + ADP. In terms of biological role, major role in the synthesis of nucleoside triphosphates other than ATP. The ATP gamma phosphate is transferred to the NDP beta phosphate via a ping-pong mechanism, using a phosphorylated active-site intermediate. In Rhodovulum sulfidophilum (Rhodobacter sulfidophilus), this protein is Nucleoside diphosphate kinase.